Reading from the N-terminus, the 1489-residue chain is MMNFEGCPSDASFGPFVKGCRGDFDFTLKFELIIFFIAPSCVFTALTFVRIFVLVSKSRIMTGNRIPLNLIKNVYSPIQIRENCFSSSQVLGLVAGMTTAALSYYEHWYSRRPSMLLSIYLFLSLLLDIAHDRTLWLNAYSTLEYGFSSVFSAAVAIKAFAVWLESRPLSKLPWGDSHVKETPDSTSGVYSLSSFMWLRGLLRLGYRKVLALSDLPALHGNMLGVVYDRFRKCSVNHFTRAEQSQERGKYKLVHALSTTLTLHLLLPVLPRIALIGLSLAQAFLTQAVLRYLEEDQPHSYSWGLIGATVLIYGGISICTSLYWYFHERLLCLVRGCLASAIFHKTLELSLTSNARSASVTLMSTDIDRIHKGFLNLHELWANIVEAGLAAWFLWRQVGIAFIAPIGLVLLSFLGVSIVGNYVGLYQKAWMGKIQNRVAITANVISNIKHLKVSGMTRPVESIIQNTRESELRASRGTRRLQIASLIIAFAPDLTAPGIMLAATKSQDFSSHKVYTAIALLTLLTVPLGSIFRSVSPLMSAFACLERIQAFLELDTRKDPRLITHSTPDTSSASGDEKVYADPLPMSRSSAVKVIQASFGWQGKEQACLKNINLTVNYSALTAIIGPVGSGKSTLCKALLGETPFSAGKVVLERDASCKVGYCDQTPFIRNCSIKENIVGFSKWNPVRYLEVVEASMLSYDLRELPEGDATIVGSGGMTLSGGQKQRIAIARSLYLDTRLLILDDILSGLDTQTEHHLFQHVLSPNGLLKKRENAPAIVFSTHSVKYARWADHIFLLNEKGEMIEQGSWEELSTYQSHLQSLCIQEKVQMTDLKQLEPVESEQPLDVTMSEIEQTRSSRRGADNQETIASGADSSARQNGDLGVYRHYFRAVPPVAIISFVTSSLSYGFLYSFPNIWLKWWLLDADSTRPHHPKAFWNGIYAMFQILALLSELLTMYLALTYFALISGATVHSSALRAITRAPLYFFASVDLGTITNYFSQDMTLVDGALPASLIQFASDVAASLGMAGNLAASSPYLAASYPLCFFLLYFVTKYYLRTSRQLRLLDLEAKSPLYAHFLELENGIATIRAADWTGEYLVQSRLLLDVSQRPAYLLAMVQRWLLFILNTFVSLLALFTVALVTQLNNHGTGFAGAGLISLMQIGQFLTNVVRSYATLEVSMGAVSRLKALTESPHRECIEGQEVVPPQEWPCRGSIKIDGVSASYDSQNDQVNEKSFSLRELNLHIEAGQKVAICGRTGSGKSSIILLLLHMLRPLRNTREDAITIDGISIQNVDPPILRERIFAVPQDTIFLPQGSSWLENMEPFATNAAECRSVLEDVNLWDVVIAQGGDLTAALDSDTLSQGQRQLFGLARAVLRKRAKAQSMSEPAPQGGLLLLDEPSSAVDFETEGLMHRVIQREFCEYTVIMVTHRLEFITQIHSVGQVSVDTQQGLFDRVLVVDAGTIVEDGHPAQLLESKEGKFRALWEASRV.

Transmembrane regions (helical) follow at residues 33–53 (IIFF…RIFV), 84–104 (CFSS…ALSY), 116–136 (LLSI…RTLW), 143–163 (LEYG…FAVW), 264–284 (LLLP…QAFL), 302–322 (WGLI…TSLY), 373–393 (FLNL…AWFL), 397–417 (VGIA…GVSI), 482–502 (IASL…MLAA), and 511–531 (HKVY…GSIF). The ABC transmembrane type-1 1 domain occupies 272–539 (IALIGLSLAQ…IFRSVSPLMS (268 aa)). The ABC transporter 1 domain occupies 591-823 (VKVIQASFGW…YQSHLQSLCI (233 aa)). N-linked (GlcNAc...) asparagine glycans are attached at residues Asn612 and Asn616. 625 to 632 (GPVGSGKS) contacts ATP. Asn670 carries an N-linked (GlcNAc...) asparagine glycan. Positions 852–862 (EQTRSSRRGAD) are enriched in basic and acidic residues. Residues 852–874 (EQTRSSRRGADNQETIASGADSS) are disordered. Over residues 863–874 (NQETIASGADSS) the composition is skewed to polar residues. Transmembrane regions (helical) follow at residues 890–910 (AVPP…GFLY), 945–965 (ILAL…FALI), 977–999 (AITR…NYFS), 1031–1051 (AASS…LYFV), 1120–1140 (WLLF…VALV), and 1149–1169 (GFAG…TNVV). Residues 902–1187 (SSLSYGFLYS…SMGAVSRLKA (286 aa)) form the ABC transmembrane type-1 2 domain. Residues 1214–1485 (IKIDGVSASY…KEGKFRALWE (272 aa)) form the ABC transporter 2 domain. Position 1254-1261 (1254-1261 (GRTGSGKS)) interacts with ATP.

The protein belongs to the ABC transporter superfamily. ABCC family. Conjugate transporter (TC 3.A.1.208) subfamily.

The protein localises to the cell membrane. Functionally, ABC transporter that may provide the dual role of fumonisin export and self-protection by allowing the fungus to evade the harmful effect of its own fumonisin production. Plays a role in the repression of the gene cluster that mediates fumonisin biosynthesis. The chain is ABC transporter FUM19 from Gibberella moniliformis (strain M3125 / FGSC 7600) (Maize ear and stalk rot fungus).